Consider the following 542-residue polypeptide: CTP synthase (542 aa).

Residues 1–265 (MTRYVFITGG…DREVLALFGI (265 aa)) are amidoligase domain. Serine 13 provides a ligand contact to CTP. Serine 13 contributes to the UTP binding site. ATP contacts are provided by residues 14–19 (SLGKGL) and aspartate 71. Mg(2+)-binding residues include aspartate 71 and glutamate 139. CTP is bound by residues 146–148 (DIE), 186–191 (KTKPTQ), and lysine 222. UTP is bound by residues 186–191 (KTKPTQ) and lysine 222. An ATP-binding site is contributed by 238–240 (RDV). In terms of domain architecture, Glutamine amidotransferase type-1 spans 291–541 (SIAIVGKYTG…IGAAVVQSRL (251 aa)). Residue glycine 353 coordinates L-glutamine. The active-site Nucleophile; for glutamine hydrolysis is cysteine 380. L-glutamine contacts are provided by residues 381 to 384 (FGMQ), glutamate 404, and arginine 469. Residues histidine 514 and glutamate 516 contribute to the active site.

It belongs to the CTP synthase family. As to quaternary structure, homotetramer.

The catalysed reaction is UTP + L-glutamine + ATP + H2O = CTP + L-glutamate + ADP + phosphate + 2 H(+). It catalyses the reaction L-glutamine + H2O = L-glutamate + NH4(+). The enzyme catalyses UTP + NH4(+) + ATP = CTP + ADP + phosphate + 2 H(+). Its pathway is pyrimidine metabolism; CTP biosynthesis via de novo pathway; CTP from UDP: step 2/2. With respect to regulation, allosterically activated by GTP, when glutamine is the substrate; GTP has no effect on the reaction when ammonia is the substrate. The allosteric effector GTP functions by stabilizing the protein conformation that binds the tetrahedral intermediate(s) formed during glutamine hydrolysis. Inhibited by the product CTP, via allosteric rather than competitive inhibition. Catalyzes the ATP-dependent amination of UTP to CTP with either L-glutamine or ammonia as the source of nitrogen. Regulates intracellular CTP levels through interactions with the four ribonucleotide triphosphates. This chain is CTP synthase, found in Methylobacterium nodulans (strain LMG 21967 / CNCM I-2342 / ORS 2060).